Reading from the N-terminus, the 265-residue chain is Flagellar brake protein YcgR (265 aa).

Residues 135 to 252 (QRRESYRLET…DETIQRYIFR (118 aa)) form the PilZ domain.

It belongs to the YcgR family. As to quaternary structure, monomer. Interacts with the flagellar basal bodies.

The protein resides in the bacterial flagellum basal body. Acts as a flagellar brake, regulating swimming and swarming in a bis-(3'-5') cyclic diguanylic acid (c-di-GMP)-dependent manner. Binds 1 c-di-GMP dimer per subunit. Increasing levels of c-di-GMP lead to decreased motility. In Xanthomonas campestris pv. campestris (strain B100), this protein is Flagellar brake protein YcgR.